The primary structure comprises 84 residues: UPF0473 protein CLD_2004 (84 aa).

The protein belongs to the UPF0473 family.

This chain is UPF0473 protein CLD_2004, found in Clostridium botulinum (strain Okra / Type B1).